The sequence spans 261 residues: Cytochrome c oxidase subunit 3 (261 aa).

The Mitochondrial matrix segment spans residues 1-15 (MTHQTHAYHMVNPSP). A helical transmembrane segment spans residues 16-34 (WPLTGALSALLMTSGLTMW). Residues 35–40 (FHFNSM) lie on the Mitochondrial intermembrane side of the membrane. Residues 41–66 (TLLMIGLTTNMLTMYQWWRDVIREST) traverse the membrane as a helical segment. The Mitochondrial matrix portion of the chain corresponds to 67 to 72 (FQGHHT). A helical membrane pass occupies residues 73-105 (PAVQKGLRYGMILFIISEVLFFTGFFWAFYHSS). Residues 106–128 (LAPTPELGGCWPPTGIHPLNPLE) lie on the Mitochondrial intermembrane side of the membrane. A helical membrane pass occupies residues 129–152 (VPLLNTSVLLASGVSITWAHHSLM). The Mitochondrial matrix segment spans residues 153–155 (EGD). Residues 156–183 (RKHMLQALFITITLGVYFTLLQASEYYE) traverse the membrane as a helical segment. Over 184–190 (APFTISD) the chain is Mitochondrial intermembrane. A helical membrane pass occupies residues 191-223 (GVYGSTFFVATGFHGLHVIIGSTFLIVCFFRQL). The Mitochondrial matrix portion of the chain corresponds to 224–232 (KFHFTSNHH). Residues 233 to 256 (FGFEAAAWYWHFVDVVWLFLYVSI) form a helical membrane-spanning segment. The Mitochondrial intermembrane segment spans residues 257-261 (YWWGS).

This sequence belongs to the cytochrome c oxidase subunit 3 family. Component of the cytochrome c oxidase (complex IV, CIV), a multisubunit enzyme composed of 14 subunits. The complex is composed of a catalytic core of 3 subunits MT-CO1, MT-CO2 and MT-CO3, encoded in the mitochondrial DNA, and 11 supernumerary subunits COX4I1 (or COX4I2), COX5A, COX5B, COX6A2 (or COX6A1), COX6B1 (or COX6B2), COX6C, COX7A1 (or COX7A2), COX7B, COX7C, COX8B and NDUFA4, which are encoded in the nuclear genome. The complex exists as a monomer or a dimer and forms supercomplexes (SCs) in the inner mitochondrial membrane with NADH-ubiquinone oxidoreductase (complex I, CI) and ubiquinol-cytochrome c oxidoreductase (cytochrome b-c1 complex, complex III, CIII), resulting in different assemblies (supercomplex SCI(1)III(2)IV(1) and megacomplex MCI(2)III(2)IV(2)).

The protein resides in the mitochondrion inner membrane. The catalysed reaction is 4 Fe(II)-[cytochrome c] + O2 + 8 H(+)(in) = 4 Fe(III)-[cytochrome c] + 2 H2O + 4 H(+)(out). In terms of biological role, component of the cytochrome c oxidase, the last enzyme in the mitochondrial electron transport chain which drives oxidative phosphorylation. The respiratory chain contains 3 multisubunit complexes succinate dehydrogenase (complex II, CII), ubiquinol-cytochrome c oxidoreductase (cytochrome b-c1 complex, complex III, CIII) and cytochrome c oxidase (complex IV, CIV), that cooperate to transfer electrons derived from NADH and succinate to molecular oxygen, creating an electrochemical gradient over the inner membrane that drives transmembrane transport and the ATP synthase. Cytochrome c oxidase is the component of the respiratory chain that catalyzes the reduction of oxygen to water. Electrons originating from reduced cytochrome c in the intermembrane space (IMS) are transferred via the dinuclear copper A center (CU(A)) of subunit 2 and heme A of subunit 1 to the active site in subunit 1, a binuclear center (BNC) formed by heme A3 and copper B (CU(B)). The BNC reduces molecular oxygen to 2 water molecules using 4 electrons from cytochrome c in the IMS and 4 protons from the mitochondrial matrix. The polypeptide is Cytochrome c oxidase subunit 3 (MT-CO3) (Bos taurus (Bovine)).